The chain runs to 122 residues: U7 snRNA-associated Sm-like protein LSm10 (122 aa).

The region spanning 16–88 (SLIILLQGLQ…VRYVHIPDGV (73 aa)) is the Sm domain.

This sequence belongs to the snRNP Sm proteins family. In terms of assembly, component of the heptameric ring U7 snRNP complex, or U7 Sm protein core complex, at least composed of LSM10, LSM11, SNRPB, SNRPD3, SNRPE, SNRPF, SNRPG and U7 snRNA. Formation of the U7 snRNP is an ATP-dependent process mediated by a specialized SMN complex containing at least the Sm protein core complex and additionally, the U7-specific LSM10 and LSM11 proteins. Interacts with CLNS1A and SMN. Not methylated. Methylation is not necessary for interaction with SMN.

The protein resides in the nucleus. Functionally, appears to function in the U7 snRNP complex that is involved in histone 3'-end processing. Increases U7 snRNA levels but not histone 3'-end pre-mRNA processing activity, when overexpressed. Required for cell cycle progression from G1 to S phases. Binds specifically to U7 snRNA. Binds to the downstream cleavage product (DCP) of histone pre-mRNA. In Mus musculus (Mouse), this protein is U7 snRNA-associated Sm-like protein LSm10 (Lsm10).